We begin with the raw amino-acid sequence, 376 residues long: Growth/differentiation factor 8 (376 aa).

Positions 1-24 are cleaved as a signal peptide; the sequence is MIQKPQMYVYIYLFVLIAAGPVDL. Positions 25–267 are excised as a propeptide; that stretch reads NEDSEREANV…VTDTPKRSRR (243 aa). The N-linked (GlcNAc...) asparagine glycan is linked to N72. 4 disulfide bridges follow: C273/C283, C282/C341, C310/C373, and C314/C375.

It belongs to the TGF-beta family. As to quaternary structure, homodimer; disulfide-linked. Interacts with WFIKKN2, leading to inhibit its activity. Interacts with FSTL3. In terms of processing, synthesized as large precursor molecule that undergoes proteolytic cleavage to generate an N-terminal propeptide and a disulfide linked C-terminal dimer, which is the biologically active molecule. The circulating form consists of a latent complex of the C-terminal dimer and other proteins, including its propeptide, which maintain the C-terminal dimer in a latent, inactive state. Ligand activation requires additional cleavage of the prodomain by a tolloid-like metalloproteinase.

It localises to the secreted. Functionally, acts specifically as a negative regulator of skeletal muscle growth. The protein is Growth/differentiation factor 8 (Mstn) of Rattus norvegicus (Rat).